The following is a 429-amino-acid chain: Aspartate--tRNA(Asp/Asn) ligase (429 aa).

An L-aspartate-binding site is contributed by glutamate 166. Residues 188–191 (QLYK) form an aspartate region. Arginine 210 serves as a coordination point for L-aspartate. Residues 210 to 212 (RAE), 218 to 220 (RHL), and glutamate 352 each bind ATP. 2 residues coordinate Mg(2+): glutamate 352 and serine 355. Residues serine 355 and arginine 359 each contribute to the L-aspartate site. 400–403 (GAER) is a binding site for ATP.

This sequence belongs to the class-II aminoacyl-tRNA synthetase family. Type 2 subfamily. As to quaternary structure, homodimer. The cofactor is Mg(2+).

The protein localises to the cytoplasm. The enzyme catalyses tRNA(Asx) + L-aspartate + ATP = L-aspartyl-tRNA(Asx) + AMP + diphosphate. Its function is as follows. Aspartyl-tRNA synthetase with relaxed tRNA specificity since it is able to aspartylate not only its cognate tRNA(Asp) but also tRNA(Asn). Reaction proceeds in two steps: L-aspartate is first activated by ATP to form Asp-AMP and then transferred to the acceptor end of tRNA(Asp/Asn). The chain is Aspartate--tRNA(Asp/Asn) ligase from Methanocorpusculum labreanum (strain ATCC 43576 / DSM 4855 / Z).